The chain runs to 420 residues: Putative U-box domain-containing protein 58 (420 aa).

The MIF4G domain occupies 4–168 (NSYVLFARLC…EDALAMKKED (165 aa)). Positions 139 to 352 (SRVVELEGNY…TAKEQMEKRQ (214 aa)) form a coiled coil. Positions 352 to 420 (QPPSSFFCPI…ALRSAIEELV (69 aa)) constitute a U-box domain.

It catalyses the reaction S-ubiquitinyl-[E2 ubiquitin-conjugating enzyme]-L-cysteine + [acceptor protein]-L-lysine = [E2 ubiquitin-conjugating enzyme]-L-cysteine + N(6)-ubiquitinyl-[acceptor protein]-L-lysine.. It functions in the pathway protein modification; protein ubiquitination. In terms of biological role, functions as an E3 ubiquitin ligase. This is Putative U-box domain-containing protein 58 (PUB58) from Arabidopsis thaliana (Mouse-ear cress).